A 327-amino-acid chain; its full sequence is Nuclear apoptosis-inducing factor 1 (327 aa).

A required for nuclear localization and apoptosis-inducing activity region spans residues 1 to 70 (MAVPAKKRKM…CRRELPEVKK (70 aa)). Residues 87 to 98 (RAAVEGGEAPGP) show a composition bias toward low complexity. Disordered regions lie at residues 87-118 (RAAV…GGGP) and 303-327 (NTAN…SIIQ). Over residues 104 to 118 (AGGPGTGGGSGGGGP) the composition is skewed to gly residues. Residues 316–327 (VAQNGQPDSIIQ) are compositionally biased toward polar residues.

The protein belongs to the NAIF1 family. In terms of assembly, interacts with HARBI1. In terms of tissue distribution, widely expressed.

It is found in the nucleus. Functionally, induces apoptosis. This is Nuclear apoptosis-inducing factor 1 (NAIF1) from Homo sapiens (Human).